The sequence spans 355 residues: uncharacterized protein (355 aa).

The region spanning 9–75 (DYYDILNISV…KLREKYDKLG (67 aa)) is the J domain.

It belongs to the DnaJ family.

It localises to the cytoplasm. This is an uncharacterized protein from Schizosaccharomyces pombe (strain 972 / ATCC 24843) (Fission yeast).